The primary structure comprises 138 residues: Aspartate 1-decarboxylase (138 aa).

S25 functions as the Schiff-base intermediate with substrate; via pyruvic acid in the catalytic mechanism. S25 bears the Pyruvic acid (Ser) mark. Position 57 (T57) interacts with substrate. Y58 acts as the Proton donor in catalysis. 73-75 (GAA) serves as a coordination point for substrate. The segment at 116 to 138 (ELGGDPAQVPDGSGLKNPRHPEA) is disordered.

Belongs to the PanD family. Heterooctamer of four alpha and four beta subunits. Pyruvate serves as cofactor. Post-translationally, is synthesized initially as an inactive proenzyme, which is activated by self-cleavage at a specific serine bond to produce a beta-subunit with a hydroxyl group at its C-terminus and an alpha-subunit with a pyruvoyl group at its N-terminus.

Its subcellular location is the cytoplasm. The enzyme catalyses L-aspartate + H(+) = beta-alanine + CO2. It functions in the pathway cofactor biosynthesis; (R)-pantothenate biosynthesis; beta-alanine from L-aspartate: step 1/1. Its function is as follows. Catalyzes the pyruvoyl-dependent decarboxylation of aspartate to produce beta-alanine. The sequence is that of Aspartate 1-decarboxylase from Corynebacterium jeikeium (strain K411).